Here is a 143-residue protein sequence, read N- to C-terminus: Probable prefoldin subunit 2 (143 aa).

Belongs to the prefoldin subunit beta family. As to quaternary structure, heterohexamer of two PFD-alpha type and four PFD-beta type subunits.

Functionally, binds specifically to cytosolic chaperonin (c-CPN) and transfers target proteins to it. Binds to nascent polypeptide chain and promotes folding in an environment in which there are many competing pathways for nonnative proteins. This is Probable prefoldin subunit 2 from Drosophila melanogaster (Fruit fly).